The primary structure comprises 258 residues: Synapse differentiation-inducing gene protein 1 (258 aa).

Over Met1–His181 the chain is Cytoplasmic. A Phosphoserine modification is found at Ser137. The helical transmembrane segment at Leu182–Tyr202 threads the bilayer. Over Leu203–Phe228 the chain is Extracellular. Positions Leu229–Ile249 form an intramembrane region, helical. At Ala250–Leu258 the chain is on the extracellular side.

The protein belongs to the CD225/Dispanin family. Homodimer. Interacts with GRIA1 and GRIA2. In terms of tissue distribution, brain-specific. Expressed in Purkinje neurons in cerebellum. Also detected in the hippocampus. Found at excitatory synapses and postsynaptic cells.

Its subcellular location is the cell membrane. It is found in the early endosome membrane. The protein resides in the postsynaptic density membrane. It localises to the synapse. The protein localises to the cell projection. Its subcellular location is the dendrite. It is found in the dendritic spine. May regulate AMPA receptor content at nascent synapses, and have a role in postsynaptic development and maturation. This is Synapse differentiation-inducing gene protein 1 (Syndig1) from Mus musculus (Mouse).